A 65-amino-acid polypeptide reads, in one-letter code: Photosystem II reaction center protein J (65 aa).

A compositionally biased stretch (basic and acidic residues) spans 1–17 (MSTKLKGPDGRIPDRLP). A disordered region spans residues 1–21 (MSTKLKGPDGRIPDRLPDGSP). A helical transmembrane segment spans residues 36 to 56 (LWLVATVGGMAVLSVLGLFFF).

The protein belongs to the PsbJ family. As to quaternary structure, PSII is composed of 1 copy each of membrane proteins PsbA, PsbB, PsbC, PsbD, PsbE, PsbF, PsbH, PsbI, PsbJ, PsbK, PsbL, PsbM, PsbT, PsbX, PsbY, Psb30/Ycf12, peripheral proteins PsbO, CyanoQ (PsbQ), PsbU, PsbV and a large number of cofactors. It forms dimeric complexes.

Its subcellular location is the cellular thylakoid membrane. In terms of biological role, one of the components of the core complex of photosystem II (PSII). PSII is a light-driven water:plastoquinone oxidoreductase that uses light energy to abstract electrons from H(2)O, generating O(2) and a proton gradient subsequently used for ATP formation. It consists of a core antenna complex that captures photons, and an electron transfer chain that converts photonic excitation into a charge separation. The sequence is that of Photosystem II reaction center protein J from Prochlorococcus marinus (strain MIT 9313).